Reading from the N-terminus, the 197-residue chain is Small ribosomal subunit protein uS10c (197 aa).

A chloroplast-targeting transit peptide spans 1–60 (MATSSLSTIVFSPLALSNSSSFPNKPQVSNLSLHSSLSNLRRTLSHSSPSSSSSSNVRVF). A disordered region spans residues 67-91 (ESQETGPESYVEEGSETSALGIGAD).

The protein belongs to the universal ribosomal protein uS10 family. As to quaternary structure, part of the 30S ribosomal subunit.

It localises to the plastid. Its subcellular location is the chloroplast. The sequence is that of Small ribosomal subunit protein uS10c (RPS10) from Mesembryanthemum crystallinum (Common ice plant).